We begin with the raw amino-acid sequence, 495 residues long: uncharacterized protein (495 aa).

The first 17 residues, 1–17 (MRTLSLLILFLSTFLFA), serve as a signal peptide directing secretion.

This is an uncharacterized protein from Aquifex aeolicus (strain VF5).